A 468-amino-acid polypeptide reads, in one-letter code: Neuraminidase (468 aa).

The Intravirion segment spans residues 1 to 15; it reads MNPNQKIITIGSASL. Positions 11 to 33 are involved in apical transport and lipid raft association; the sequence is GSASLGLVIFNILLHVASITLGI. Residues 16–36 form a helical membrane-spanning segment; that stretch reads GLVIFNILLHVASITLGIISV. Positions 36–80 are hypervariable stalk region; that stretch reads VTKDNKVHICNTTEVYNETVRVETVVIPVNNTIYLNHEPEFLNNT. Residues 37–468 lie on the Virion surface side of the membrane; the sequence is TKDNKVHICN…AILPFDIDKM (432 aa). 4 N-linked (GlcNAc...) asparagine; by host glycosylation sites follow: Asn-46, Asn-52, Asn-65, and Asn-78. Residues 83–468 are head of neuraminidase; sequence LCDVSGFAIV…AILPFDIDKM (386 aa). 8 disulfide bridges follow: Cys-84–Cys-414, Cys-116–Cys-121, Cys-176–Cys-223, Cys-225–Cys-230, Cys-271–Cys-284, Cys-273–Cys-282, Cys-310–Cys-329, and Cys-418–Cys-444. Arg-110 lines the substrate pocket. Residue Asn-138 is glycosylated (N-linked (GlcNAc...) asparagine; by host). Residue Asp-143 is the Proton donor/acceptor of the active site. Arg-144 is a binding site for substrate. Residue 269–270 coordinates substrate; sequence EE. Arg-285 contacts substrate. Ca(2+) contacts are provided by Asp-286, Gly-290, and Asp-316. Arg-365 contributes to the substrate binding site. N-linked (GlcNAc...) asparagine; by host glycosylation is present at Asn-395. Tyr-399 acts as the Nucleophile in catalysis.

The protein belongs to the glycosyl hydrolase 34 family. In terms of assembly, homotetramer. It depends on Ca(2+) as a cofactor. Post-translationally, N-glycosylated.

It localises to the virion membrane. The protein localises to the host apical cell membrane. The catalysed reaction is Hydrolysis of alpha-(2-&gt;3)-, alpha-(2-&gt;6)-, alpha-(2-&gt;8)- glycosidic linkages of terminal sialic acid residues in oligosaccharides, glycoproteins, glycolipids, colominic acid and synthetic substrates.. Inhibited by the neuraminidase inhibitors zanamivir (Relenza) and oseltamivir (Tamiflu). These drugs interfere with the release of progeny virus from infected cells and are effective against all influenza strains. Resistance to neuraminidase inhibitors is quite rare. Its function is as follows. Catalyzes the removal of terminal sialic acid residues from viral and cellular glycoconjugates. Cleaves off the terminal sialic acids on the glycosylated HA during virus budding to facilitate virus release. Additionally helps virus spread through the circulation by further removing sialic acids from the cell surface. These cleavages prevent self-aggregation and ensure the efficient spread of the progeny virus from cell to cell. Otherwise, infection would be limited to one round of replication. Described as a receptor-destroying enzyme because it cleaves a terminal sialic acid from the cellular receptors. May facilitate viral invasion of the upper airways by cleaving the sialic acid moieties on the mucin of the airway epithelial cells. Likely to plays a role in the budding process through its association with lipid rafts during intracellular transport. May additionally display a raft-association independent effect on budding. Plays a role in the determination of host range restriction on replication and virulence. Sialidase activity in late endosome/lysosome traffic seems to enhance virus replication. This Aves protein is Neuraminidase.